Consider the following 759-residue polypeptide: Glycerophosphodiester phosphodiesterase GDPDL3 (759 aa).

A signal peptide spans 1-27; that stretch reads MRGLLRASSLLLCGVILIQLLAAQIHA. The Extracellular segment spans residues 28 to 738; sequence QSKKPKSPWP…TNAQAPSGQT (711 aa). The region spanning 44–344 is the GP-PDE 1 domain; sequence PLVIARGGFS…DFPITASASL (301 aa). Residues Asn99, Asn186, Asn242, Asn251, Asn326, Asn353, Asn413, Asn424, Asn488, Asn528, Asn540, and Asn647 are each glycosylated (N-linked (GlcNAc...) asparagine). The GP-PDE 2 domain occupies 360–661; the sequence is FLVITKDGAS…EFPFTAARYK (302 aa). The disordered stretch occupies residues 702–734; that stretch reads FTDADVTEPPLPPVTAKAPTSSPGTPSTNAQAP. Positions 719-734 are enriched in polar residues; the sequence is APTSSPGTPSTNAQAP. Residues 739–759 form a helical membrane-spanning segment; sequence RITLSLLLSVFAMVLASLLLL.

The protein belongs to the glycerophosphoryl diester phosphodiesterase family. Expressed in roots, shoots, rosette and cauline leaves, stems, flowers and siliques.

It localises to the cell membrane. It carries out the reaction a sn-glycero-3-phosphodiester + H2O = an alcohol + sn-glycerol 3-phosphate + H(+). In terms of biological role, involved in primary cell wall organization. Required for the accumulation of crystalline cellulose. This chain is Glycerophosphodiester phosphodiesterase GDPDL3, found in Arabidopsis thaliana (Mouse-ear cress).